A 348-amino-acid chain; its full sequence is Protein RecA (348 aa).

An ATP-binding site is contributed by 67–74 (GPESSGKT).

The protein belongs to the RecA family.

It localises to the cytoplasm. Its function is as follows. Can catalyze the hydrolysis of ATP in the presence of single-stranded DNA, the ATP-dependent uptake of single-stranded DNA by duplex DNA, and the ATP-dependent hybridization of homologous single-stranded DNAs. It interacts with LexA causing its activation and leading to its autocatalytic cleavage. The protein is Protein RecA of Salinispora tropica (strain ATCC BAA-916 / DSM 44818 / JCM 13857 / NBRC 105044 / CNB-440).